We begin with the raw amino-acid sequence, 377 residues long: MSCSNLTMLVSSKPSLSDSSALSFRSSVSPFQLPNHNTSGPSNPSRSSSVTPVHCGLRDLRDRIESVKNTQKITEAMKLVAAAKVRRAQEAVVGARPFSETLVEVLYNINEQLQTDDIDVPLTKVRPVKKVALVVVTGDRGLCGGFNNYLIKKAEARIRDLKALGIDYTIISVGKKGNSYFIRRPYIPVDKFLEGSNLPTAKDAQAIADDVFSLFVSEEVDKVELLYTKFVSLVKSEPVIHTLLPLSPKGEICDINGNCVDAANDEFFRLTTKEGKLTVERDIIRTKTTDFSPILQFEQDPVQILDALLPLYLNSQILRALQESLASELAARMSAMSSATDNATELKKNLSRVYNRQRQAKITGEILEIVAGADALV.

The N-terminal 55 residues, 1–55 (MSCSNLTMLVSSKPSLSDSSALSFRSSVSPFQLPNHNTSGPSNPSRSSSVTPVHC), are a transit peptide targeting the chloroplast. Positions 30-52 (PFQLPNHNTSGPSNPSRSSSVTP) are disordered. Over residues 37-52 (NTSGPSNPSRSSSVTP) the composition is skewed to low complexity. Cys-143 is a catalytic residue. Cys-253 and Cys-259 are disulfide-bonded.

This sequence belongs to the ATPase gamma chain family. F-type ATPases have 2 components, CF(1) - the catalytic core - and CF(0) - the membrane proton channel. CF(1) has five subunits: alpha(3), beta(3), gamma(1), delta(1), epsilon(1). CF(0) has four main subunits: a, b, b' and c.

It is found in the plastid. Its subcellular location is the chloroplast thylakoid membrane. Produces ATP from ADP in the presence of a proton gradient across the membrane. The gamma chain is believed to be important in regulating ATPase activity and the flow of protons through the CF(0) complex. This Nicotiana tabacum (Common tobacco) protein is ATP synthase gamma chain, chloroplastic (ATPC).